The primary structure comprises 337 residues: DNA-directed RNA polymerase subunit alpha (337 aa).

Positions 1–223 (MLISQRPALT…ELFGLAQELN (223 aa)) are alpha N-terminal domain (alpha-NTD). Residues 238–337 (SEHIAAYSMP…IDTEGEDIAE (100 aa)) are alpha C-terminal domain (alpha-CTD).

It belongs to the RNA polymerase alpha chain family. In terms of assembly, homodimer. The RNAP catalytic core consists of 2 alpha, 1 beta, 1 beta' and 1 omega subunit. When a sigma factor is associated with the core the holoenzyme is formed, which can initiate transcription.

The enzyme catalyses RNA(n) + a ribonucleoside 5'-triphosphate = RNA(n+1) + diphosphate. In terms of biological role, DNA-dependent RNA polymerase catalyzes the transcription of DNA into RNA using the four ribonucleoside triphosphates as substrates. In Corynebacterium jeikeium (strain K411), this protein is DNA-directed RNA polymerase subunit alpha.